We begin with the raw amino-acid sequence, 458 residues long: tRNA modification GTPase MnmE (458 aa).

(6S)-5-formyl-5,6,7,8-tetrahydrofolate is bound by residues arginine 26, glutamate 88, and arginine 127. Residues 224–378 (GLSTAIIGRP…IEDRINQLFF (155 aa)) form the TrmE-type G domain. Asparagine 234 is a binding site for K(+). Residues 234-239 (NVGKSS), 253-259 (TDIAGTT), and 278-281 (DTAG) contribute to the GTP site. Residue serine 238 coordinates Mg(2+). K(+) contacts are provided by threonine 253, isoleucine 255, and threonine 258. Threonine 259 is a Mg(2+) binding site. Residue lysine 458 coordinates (6S)-5-formyl-5,6,7,8-tetrahydrofolate.

This sequence belongs to the TRAFAC class TrmE-Era-EngA-EngB-Septin-like GTPase superfamily. TrmE GTPase family. Homodimer. Heterotetramer of two MnmE and two MnmG subunits. Requires K(+) as cofactor.

It is found in the cytoplasm. In terms of biological role, exhibits a very high intrinsic GTPase hydrolysis rate. Involved in the addition of a carboxymethylaminomethyl (cmnm) group at the wobble position (U34) of certain tRNAs, forming tRNA-cmnm(5)s(2)U34. This Streptococcus pyogenes serotype M4 (strain MGAS10750) protein is tRNA modification GTPase MnmE.